We begin with the raw amino-acid sequence, 94 residues long: Small polypeptide ROTUNDIFOLIA LIKE 1 (94 aa).

The span at 1–13 shows a compositional bias: polar residues; it reads MRQCASASSSTSR. Residues 1–26 form a disordered region; it reads MRQCASASSSTSRPPEAAGEEGKRRR. Residues 28 to 59 are required for DVL/RTFL small polypeptide activity; the sequence is RRGWLLQAAAREQRSRFYIFRRCVAMLLCWYK. A helical transmembrane segment spans residues 63 to 82; it reads ITPYNVVPLGIYGLVWFATM.

It belongs to the DVL/RTFL small polypeptides family.

The protein localises to the cell membrane. Functionally, small polypeptide acting as a regulatory molecule which coordinates cellular responses required for differentiation, growth and development, probably by restricting polar cell proliferation in lateral organs. The polypeptide is Small polypeptide ROTUNDIFOLIA LIKE 1 (Oryza sativa subsp. japonica (Rice)).